Consider the following 357-residue polypeptide: Isopentenyl-diphosphate delta-isomerase (357 aa).

12–13 (RK) lines the substrate pocket. FMN-binding positions include Ser70, 71–73 (SMT), Ser101, and Asn130. Substrate is bound at residue 101 to 103 (SMR). Substrate is bound at residue Gln165. Glu166 is a Mg(2+) binding site. Residues Lys197, 289–291 (GIR), and 310–311 (AQ) contribute to the FMN site.

Belongs to the IPP isomerase type 2 family. Homooctamer. Dimer of tetramers. FMN is required as a cofactor. It depends on NADPH as a cofactor. The cofactor is Mg(2+).

The protein localises to the cytoplasm. The enzyme catalyses isopentenyl diphosphate = dimethylallyl diphosphate. Involved in the biosynthesis of isoprenoids. Catalyzes the 1,3-allylic rearrangement of the homoallylic substrate isopentenyl (IPP) to its allylic isomer, dimethylallyl diphosphate (DMAPP). The sequence is that of Isopentenyl-diphosphate delta-isomerase from Chlorobaculum parvum (strain DSM 263 / NCIMB 8327) (Chlorobium vibrioforme subsp. thiosulfatophilum).